We begin with the raw amino-acid sequence, 855 residues long: Leucine--tRNA ligase (855 aa).

The 'HIGH' region signature appears at 45-55; sequence PYPSGRLHMGH. Residues 619–623 carry the 'KMSKS' region motif; it reads KMSKS. Lys-622 contributes to the ATP binding site.

This sequence belongs to the class-I aminoacyl-tRNA synthetase family.

Its subcellular location is the cytoplasm. The catalysed reaction is tRNA(Leu) + L-leucine + ATP = L-leucyl-tRNA(Leu) + AMP + diphosphate. This Hyphomonas neptunium (strain ATCC 15444) protein is Leucine--tRNA ligase.